The sequence spans 82 residues: ATP synthase subunit c, chloroplastic (82 aa).

2 helical membrane passes run 7–27 and 57–77; these read AASV…PGIG and LAFM…LLFA.

This sequence belongs to the ATPase C chain family. As to quaternary structure, F-type ATPases have 2 components, F(1) - the catalytic core - and F(0) - the membrane proton channel. F(1) has five subunits: alpha(3), beta(3), gamma(1), delta(1), epsilon(1). F(0) has four main subunits: a(1), b(1), b'(1) and c(10-14). The alpha and beta chains form an alternating ring which encloses part of the gamma chain. F(1) is attached to F(0) by a central stalk formed by the gamma and epsilon chains, while a peripheral stalk is formed by the delta, b and b' chains.

The protein localises to the plastid. It localises to the chloroplast thylakoid membrane. F(1)F(0) ATP synthase produces ATP from ADP in the presence of a proton or sodium gradient. F-type ATPases consist of two structural domains, F(1) containing the extramembraneous catalytic core and F(0) containing the membrane proton channel, linked together by a central stalk and a peripheral stalk. During catalysis, ATP synthesis in the catalytic domain of F(1) is coupled via a rotary mechanism of the central stalk subunits to proton translocation. Its function is as follows. Key component of the F(0) channel; it plays a direct role in translocation across the membrane. A homomeric c-ring of between 10-14 subunits forms the central stalk rotor element with the F(1) delta and epsilon subunits. The polypeptide is ATP synthase subunit c, chloroplastic (Porphyra purpurea (Red seaweed)).